Consider the following 396-residue polypeptide: Tryptophan synthase beta chain (396 aa).

K88 carries the post-translational modification N6-(pyridoxal phosphate)lysine.

The protein belongs to the TrpB family. As to quaternary structure, tetramer of two alpha and two beta chains. It depends on pyridoxal 5'-phosphate as a cofactor.

It carries out the reaction (1S,2R)-1-C-(indol-3-yl)glycerol 3-phosphate + L-serine = D-glyceraldehyde 3-phosphate + L-tryptophan + H2O. It functions in the pathway amino-acid biosynthesis; L-tryptophan biosynthesis; L-tryptophan from chorismate: step 5/5. Functionally, the beta subunit is responsible for the synthesis of L-tryptophan from indole and L-serine. This Shewanella sp. (strain MR-7) protein is Tryptophan synthase beta chain.